A 337-amino-acid chain; its full sequence is Biotin synthase (337 aa).

One can recognise a Radical SAM core domain in the interval 62-289; that stretch reads NAVQLSTLIS…KAMVRLSAGR (228 aa). The [4Fe-4S] cluster site is built by C77, C81, and C84. [2Fe-2S] cluster is bound by residues C121, C152, C212, and R284.

It belongs to the radical SAM superfamily. Biotin synthase family. As to quaternary structure, homodimer. Requires [4Fe-4S] cluster as cofactor. [2Fe-2S] cluster is required as a cofactor.

It catalyses the reaction (4R,5S)-dethiobiotin + (sulfur carrier)-SH + 2 reduced [2Fe-2S]-[ferredoxin] + 2 S-adenosyl-L-methionine = (sulfur carrier)-H + biotin + 2 5'-deoxyadenosine + 2 L-methionine + 2 oxidized [2Fe-2S]-[ferredoxin]. It participates in cofactor biosynthesis; biotin biosynthesis; biotin from 7,8-diaminononanoate: step 2/2. In terms of biological role, catalyzes the conversion of dethiobiotin (DTB) to biotin by the insertion of a sulfur atom into dethiobiotin via a radical-based mechanism. The sequence is that of Biotin synthase from Nitrosomonas europaea (strain ATCC 19718 / CIP 103999 / KCTC 2705 / NBRC 14298).